Reading from the N-terminus, the 207-residue chain is Large ribosomal subunit protein bL25 (207 aa).

Residues 171–207 are disordered; sequence EEETVVTVSAPRAEEEPTTTEAPEPEAVHGKDEEPVE. Positions 196-207 are enriched in basic and acidic residues; it reads EAVHGKDEEPVE.

It belongs to the bacterial ribosomal protein bL25 family. CTC subfamily. In terms of assembly, part of the 50S ribosomal subunit; part of the 5S rRNA/L5/L18/L25 subcomplex. Contacts the 5S rRNA. Binds to the 5S rRNA independently of L5 and L18.

In terms of biological role, this is one of the proteins that binds to the 5S RNA in the ribosome where it forms part of the central protuberance. This chain is Large ribosomal subunit protein bL25, found in Listeria monocytogenes serotype 4b (strain F2365).